Reading from the N-terminus, the 419-residue chain is Enolase (419 aa).

Gln-160 is a (2R)-2-phosphoglycerate binding site. The active-site Proton donor is the Glu-204. 3 residues coordinate Mg(2+): Asp-240, Glu-283, and Asp-309. 4 residues coordinate (2R)-2-phosphoglycerate: Lys-334, Arg-363, Ser-364, and Lys-385. Lys-334 acts as the Proton acceptor in catalysis.

The protein belongs to the enolase family. Requires Mg(2+) as cofactor.

The protein localises to the cytoplasm. The protein resides in the secreted. It is found in the cell surface. It catalyses the reaction (2R)-2-phosphoglycerate = phosphoenolpyruvate + H2O. It functions in the pathway carbohydrate degradation; glycolysis; pyruvate from D-glyceraldehyde 3-phosphate: step 4/5. In terms of biological role, catalyzes the reversible conversion of 2-phosphoglycerate (2-PG) into phosphoenolpyruvate (PEP). It is essential for the degradation of carbohydrates via glycolysis. The sequence is that of Enolase from Pyrobaculum aerophilum (strain ATCC 51768 / DSM 7523 / JCM 9630 / CIP 104966 / NBRC 100827 / IM2).